We begin with the raw amino-acid sequence, 320 residues long: MNKHVNKVALIGAGFVGSSYAFALINQGITDELVVIDVNKEKAMGDVMDLNHGKAFAPQPVKTSYGTYEDCKDADIVCICAGANQKPGETRLELVEKNLKIFKGIVSEVMASGFDGIFLVATNPVDILTYATWKFSGLPKERVIGSGTTLDSARFRFMLSEYFGAAPQNVHAHIIGEHGDTELPVWSHANVGGVPVSELVEKNDAYKQEELDQIVDDVKNAAYHIIEKKGATYYGVAMSLARITKAILHNENSILTVSTYLDGQYGADDVYIGVPAVVNRGGIAGITELNLNEKEKEQFLHSAGVLKNILKPHFAEQKVN.

NAD(+)-binding positions include 15 to 16 (FV), Asp-37, Lys-42, Tyr-68, and 82 to 83 (GA). Residues Gln-85, Arg-91, and 123-126 (NPVD) contribute to the substrate site. NAD(+) contacts are provided by residues 121 to 123 (ATN) and Ser-146. A substrate-binding site is contributed by 151 to 154 (DSAR). Beta-D-fructose 1,6-bisphosphate contacts are provided by residues Arg-156 and 168–172 (QNVHA). His-178 acts as the Proton acceptor in catalysis. Phosphotyrosine is present on Tyr-223. Substrate is bound at residue Thr-232.

It belongs to the LDH/MDH superfamily. LDH family. As to quaternary structure, homotetramer.

It localises to the cytoplasm. The enzyme catalyses (S)-lactate + NAD(+) = pyruvate + NADH + H(+). It functions in the pathway fermentation; pyruvate fermentation to lactate; (S)-lactate from pyruvate: step 1/1. Its activity is regulated as follows. Allosterically activated by fructose 1,6-bisphosphate (FBP). In terms of biological role, catalyzes the conversion of lactate to pyruvate. In Bacillus subtilis (strain 168), this protein is L-lactate dehydrogenase.